We begin with the raw amino-acid sequence, 465 residues long: Ribulose bisphosphate carboxylase large chain (465 aa).

At lysine 4 the chain carries N6,N6,N6-trimethyllysine. Positions 113 and 163 each coordinate substrate. Lysine 165 functions as the Proton acceptor in the catalytic mechanism. Lysine 167 provides a ligand contact to substrate. Residues lysine 191, aspartate 193, and glutamate 194 each coordinate Mg(2+). Lysine 191 bears the N6-carboxylysine mark. Histidine 284 serves as the catalytic Proton acceptor. Substrate is bound by residues arginine 285, histidine 317, and serine 369.

Belongs to the RuBisCO large chain family. Type I subfamily. Heterohexadecamer of 8 large chains and 8 small chains; disulfide-linked. The disulfide link is formed within the large subunit homodimers. Requires Mg(2+) as cofactor. In terms of processing, the disulfide bond which can form in the large chain dimeric partners within the hexadecamer appears to be associated with oxidative stress and protein turnover.

It localises to the plastid. The protein localises to the chloroplast. The catalysed reaction is 2 (2R)-3-phosphoglycerate + 2 H(+) = D-ribulose 1,5-bisphosphate + CO2 + H2O. It catalyses the reaction D-ribulose 1,5-bisphosphate + O2 = 2-phosphoglycolate + (2R)-3-phosphoglycerate + 2 H(+). In terms of biological role, ruBisCO catalyzes two reactions: the carboxylation of D-ribulose 1,5-bisphosphate, the primary event in carbon dioxide fixation, as well as the oxidative fragmentation of the pentose substrate in the photorespiration process. Both reactions occur simultaneously and in competition at the same active site. The polypeptide is Ribulose bisphosphate carboxylase large chain (Passiflora quadrangularis (Grenadine)).